Reading from the N-terminus, the 446-residue chain is Indoleacetamide hydrolase (446 aa).

Catalysis depends on charge relay system residues Lys-71 and Ser-146. Ser-170 functions as the Acyl-ester intermediate in the catalytic mechanism.

It belongs to the amidase family.

It functions in the pathway plant hormone metabolism; auxin biosynthesis. Functionally, hydrolyzes indole-3-acetamide (IAM) into indole-3-acetic acid (IAA). This Pseudomonas syringae pv. syringae protein is Indoleacetamide hydrolase (iaaH).